The following is a 404-amino-acid chain: Protein ORF23 (404 aa).

The protein belongs to the lymphocryptovirus BTRF1 family. As to quaternary structure, interacts with ORF34.

The protein resides in the host nucleus. It localises to the host cytoplasm. Plays a role in the expression of late genes. In Homo sapiens (Human), this protein is Protein ORF23 (ORF23).